The chain runs to 151 residues: Ribosome maturation factor RimP (151 aa).

Belongs to the RimP family.

It is found in the cytoplasm. Functionally, required for maturation of 30S ribosomal subunits. This chain is Ribosome maturation factor RimP, found in Shewanella sp. (strain ANA-3).